The sequence spans 404 residues: CCA-adding enzyme (404 aa).

The ATP site is built by Gly27 and Arg30. Residues Gly27 and Arg30 each coordinate CTP. Residues Asp40 and Asp42 each contribute to the Mg(2+) site. Residues Arg111, Asp154, Arg157, Arg160, and Arg163 each contribute to the ATP site. CTP-binding residues include Arg111, Asp154, Arg157, Arg160, and Arg163.

The protein belongs to the tRNA nucleotidyltransferase/poly(A) polymerase family. Bacterial CCA-adding enzyme type 3 subfamily. As to quaternary structure, homodimer. Mg(2+) serves as cofactor.

The catalysed reaction is a tRNA precursor + 2 CTP + ATP = a tRNA with a 3' CCA end + 3 diphosphate. The enzyme catalyses a tRNA with a 3' CCA end + 2 CTP + ATP = a tRNA with a 3' CCACCA end + 3 diphosphate. In terms of biological role, catalyzes the addition and repair of the essential 3'-terminal CCA sequence in tRNAs without using a nucleic acid template. Adds these three nucleotides in the order of C, C, and A to the tRNA nucleotide-73, using CTP and ATP as substrates and producing inorganic pyrophosphate. tRNA 3'-terminal CCA addition is required both for tRNA processing and repair. Also involved in tRNA surveillance by mediating tandem CCA addition to generate a CCACCA at the 3' terminus of unstable tRNAs. While stable tRNAs receive only 3'-terminal CCA, unstable tRNAs are marked with CCACCA and rapidly degraded. The structural flexibility of RNA controls the choice between CCA versus CCACCA addition: following the first CCA addition cycle, nucleotide-binding to the active site triggers a clockwise screw motion, producing torque on the RNA. This ejects stable RNAs, whereas unstable RNAs are refolded while bound to the enzyme and subjected to a second CCA catalytic cycle. The chain is CCA-adding enzyme from Geobacillus stearothermophilus (Bacillus stearothermophilus).